The chain runs to 96 residues: Protein RnfH (96 aa).

Belongs to the UPF0125 (RnfH) family.

In Shigella flexneri, this protein is Protein RnfH.